A 433-amino-acid chain; its full sequence is Tol-Pal system protein TolB (433 aa).

Positions 1–21 (MRNLLRGMLVVICCMAGIAAA) are cleaved as a signal peptide.

The protein belongs to the TolB family. As to quaternary structure, the Tol-Pal system is composed of five core proteins: the inner membrane proteins TolA, TolQ and TolR, the periplasmic protein TolB and the outer membrane protein Pal. They form a network linking the inner and outer membranes and the peptidoglycan layer.

The protein localises to the periplasm. In terms of biological role, part of the Tol-Pal system, which plays a role in outer membrane invagination during cell division and is important for maintaining outer membrane integrity. This Pseudomonas fluorescens (strain ATCC BAA-477 / NRRL B-23932 / Pf-5) protein is Tol-Pal system protein TolB.